We begin with the raw amino-acid sequence, 914 residues long: MSETQKENPYSSTVLLPKTDFPMKADLAKREPEQIRSWKQNRIFRKMREQRSGKKEFVLHDGPPYANGNFHLGHALNKILKDTIIKSKSLAGFYADMIPGWDCHGLPIEVQVLKNLGKKVRETGPEELRQLCRKYAEEFVGKQGDDLSRFLCFWDEGRIYKTMSPDFEAKIVEVFGELFKKGYVYRGKKPVYWSIDLATAHAEAEIEYYPHISPSIYVKFPIIGEKKRFCLIWTTTPWTLPANLAICFNRKIEYSIFKTESSEELILADALAENVTITTGVALTKLKPITSEELAALKFQHPFVDRISVSLFGDHVTLEAGTGCVHTAPGHGQDDYKVGLAAGLEPFSPVDDYGRYTDEFPLMQGKKVFDANPEIIQLLRDKGLLLYHGELEHSYPHSWRSKKPLIFRATPQWFFKIDFQDLREKSLSAIDGVRWIPSWGITRIRSMVETRPDWCLSRQRNWGVPIPAFTCESCGQTHIDDASIQFFTKMVREKGIEIWYSEETKDLLPPKTKCGKCGNDSFKKGNDILDVWFDSGVSNFSVLGERKDEPPADLYLEGSDQHRGWFQSSLWPSMALRGIPPYKAVLTHGYVLDEKGRAMSKSLGNGIDPTADIIQVYGADILRLWVSSLDFRDDIKVGKESLKIVSEQYRKIRNTFRYLLGNLDGHTPEQNLPFEELEELDRFYLSKLAGFVEDAVASYETYQFHQIYQKLILFCTVTLSQDYFDMIRDRMYCDLRDSKSRRSSSTALQYILDSLCILVAPILSFTAEEVWTSNGKKDSVFLQTFPDLKSWKNQSLEDKFESALQAREVVQKALEIARQEGKLGKSLEAALEIVSKSGLSFGELLPKETLELLFVVSQIHEENPGMEVLSSHENEKFSVKVLKPLQGECPRCWRHTEDISKEGDLCGRCKSVVA.

The 'HIGH' region motif lies at Pro64–His74. Residue Glu557 coordinates L-isoleucyl-5'-AMP. Residues Ala598–Ser602 carry the 'KMSKS' region motif. Lys601 contacts ATP. 4 residues coordinate Zn(2+): Cys889, Cys892, Cys906, and Cys909.

Belongs to the class-I aminoacyl-tRNA synthetase family. IleS type 1 subfamily. Monomer. Zn(2+) serves as cofactor.

Its subcellular location is the cytoplasm. It catalyses the reaction tRNA(Ile) + L-isoleucine + ATP = L-isoleucyl-tRNA(Ile) + AMP + diphosphate. Functionally, catalyzes the attachment of isoleucine to tRNA(Ile). As IleRS can inadvertently accommodate and process structurally similar amino acids such as valine, to avoid such errors it has two additional distinct tRNA(Ile)-dependent editing activities. One activity is designated as 'pretransfer' editing and involves the hydrolysis of activated Val-AMP. The other activity is designated 'posttransfer' editing and involves deacylation of mischarged Val-tRNA(Ile). This chain is Isoleucine--tRNA ligase, found in Leptospira borgpetersenii serovar Hardjo-bovis (strain JB197).